Reading from the N-terminus, the 619-residue chain is Zinc finger protein 668 (619 aa).

M1 carries the N-acetylmethionine modification. Position 10 is a phosphoserine (S10). Residues 22–44 (YKCLFCTKTFPNAPRAARHAATH) form a C2H2-type 1 zinc finger. The interval 36–74 (RAARHAATHTPTDCTEEVREAQPKVDTEPKAEEASGDKV) is disordered. Residues 51–71 (EEVREAQPKVDTEPKAEEASG) are compositionally biased toward basic and acidic residues. Residues K59, K65, and K80 each participate in a glycyl lysine isopeptide (Lys-Gly) (interchain with G-Cter in SUMO2) cross-link. C2H2-type zinc fingers lie at residues 84 to 106 (YACPLCPKAYKTAPELRSHGRSH), 112 to 134 (FPCPECGRRFMQPVCLRVHLASH), 140 to 162 (FRCTHCPKAYGTLSKLKIHQRGH), 168 to 190 (YACPDCGKSFADPSVFRKHRRTH), 196 to 218 (YSCERCGKAYAELKDLRNHERSH), 224 to 246 (FLCSECGKSFSRSSSLTCHQRIH), 252 to 274 (YRCPACGKGFTQLSSYQSHERTH), 280 to 302 (FLCPRCGRMFSDPSSFRRHQRAH), 308 to 330 (YRCEKCGKDFRQPADLAMHRRVH), 336 to 358 (FKCLQCDKTFVASWDLKRHALVH), and 364 to 386 (FRCEECGRAFAERASLTKHSRMH). K154 is covalently cross-linked (Glycyl lysine isopeptide (Lys-Gly) (interchain with G-Cter in SUMO2)). S387 is subject to Phosphoserine. Residues 392 to 414 (FHCNACGKSFVVLSSLRKHERTH) form a C2H2-type 13 zinc finger. A disordered region spans residues 491 to 513 (VGEAPSTLGDAGEVGGEETDEKP). K512 is covalently cross-linked (Glycyl lysine isopeptide (Lys-Gly) (interchain with G-Cter in SUMO2)). 3 consecutive C2H2-type zinc fingers follow at residues 516–538 (FVCRECKETFSTLTLLRRHERSH), 544–566 (FPCTQCGKSFSDRAGLRKHSRTH), and 572–594 (YSCSQCPKAFLSASDLRKHERTH).

This sequence belongs to the krueppel C2H2-type zinc-finger protein family.

It is found in the nucleus. Its function is as follows. May be involved in transcriptional regulation. May play a role in DNA repair process. The polypeptide is Zinc finger protein 668 (Znf668) (Mus musculus (Mouse)).